Consider the following 438-residue polypeptide: Phosphoribosylamine--glycine ligase (438 aa).

Positions 107–319 (RKLFEDYDIP…LAKISKQIVD (213 aa)) constitute an ATP-grasp domain. ATP is bound at residue 134-197 (IDNFDEPVVV…EELLLGEEYT (64 aa)). The Mg(2+) site is built by glutamine 277, glutamate 289, and asparagine 291. 3 residues coordinate Mn(2+): glutamine 277, glutamate 289, and asparagine 291.

This sequence belongs to the GARS family. Requires Mg(2+) as cofactor. It depends on Mn(2+) as a cofactor.

It carries out the reaction 5-phospho-beta-D-ribosylamine + glycine + ATP = N(1)-(5-phospho-beta-D-ribosyl)glycinamide + ADP + phosphate + H(+). It participates in purine metabolism; IMP biosynthesis via de novo pathway; N(1)-(5-phospho-D-ribosyl)glycinamide from 5-phospho-alpha-D-ribose 1-diphosphate: step 2/2. The sequence is that of Phosphoribosylamine--glycine ligase from Methanosphaera stadtmanae (strain ATCC 43021 / DSM 3091 / JCM 11832 / MCB-3).